The following is a 288-amino-acid chain: MSRAITRAQLDKLVRSITKFYPQKYADKSWDNTGLLIDCSTAQVTTADANAKTKVLLTVDLTKSVAQEAVDANCNVIVAYHPFIFPSWNRLSPHTNPQHETAIKLIQYGISVYCPHTAVDAARGGVNDWLVRGLNNGENVAKSYALETVSGETDDLIGYGRFVEFNKDISLEQIVKNVKRVLRVPYVQVASLAAPSAWNQLKIKKVAVCAGSGSGVFKQLKEDVDLYYTGEMSHHEVLKWKEMGKTVIVCNHSNTERGFLQDVMKGLLQDEGHEVVVSKMDCDPLTVA.

It belongs to the GTP cyclohydrolase I type 2/NIF3 family. May interact with NGG1.

The protein localises to the mitochondrion. The protein is NGG1-interacting factor 3 of Saccharomyces cerevisiae (strain ATCC 204508 / S288c) (Baker's yeast).